The primary structure comprises 212 residues: Pyrrolidone-carboxylate peptidase (212 aa).

Residues Glu78, Cys141, and His165 contribute to the active site.

It belongs to the peptidase C15 family. As to quaternary structure, homotetramer.

It is found in the cytoplasm. It catalyses the reaction Release of an N-terminal pyroglutamyl group from a polypeptide, the second amino acid generally not being Pro.. Its function is as follows. Removes 5-oxoproline from various penultimate amino acid residues except L-proline. This is Pyrrolidone-carboxylate peptidase from Staphylococcus haemolyticus (strain JCSC1435).